A 287-amino-acid chain; its full sequence is Bifunctional protein FolD (287 aa).

NADP(+) contacts are provided by residues 167-169 and T192; that span reads GRS.

This sequence belongs to the tetrahydrofolate dehydrogenase/cyclohydrolase family. Homodimer.

It carries out the reaction (6R)-5,10-methylene-5,6,7,8-tetrahydrofolate + NADP(+) = (6R)-5,10-methenyltetrahydrofolate + NADPH. The enzyme catalyses (6R)-5,10-methenyltetrahydrofolate + H2O = (6R)-10-formyltetrahydrofolate + H(+). Its pathway is one-carbon metabolism; tetrahydrofolate interconversion. In terms of biological role, catalyzes the oxidation of 5,10-methylenetetrahydrofolate to 5,10-methenyltetrahydrofolate and then the hydrolysis of 5,10-methenyltetrahydrofolate to 10-formyltetrahydrofolate. The chain is Bifunctional protein FolD from Sorangium cellulosum (strain So ce56) (Polyangium cellulosum (strain So ce56)).